The chain runs to 518 residues: Flagellin (518 aa).

It belongs to the bacterial flagellin family.

The protein localises to the secreted. Its subcellular location is the bacterial flagellum. Functionally, flagellin is the subunit protein which polymerizes to form the filaments of bacterial flagella. The protein is Flagellin (flaA) of Aquifex aeolicus (strain VF5).